A 171-amino-acid chain; its full sequence is Small ribosomal subunit protein uS5 (171 aa).

The region spanning 15–78 is the S5 DRBM domain; the sequence is LKDRLVAINR…EAAKKNLTRV (64 aa).

This sequence belongs to the universal ribosomal protein uS5 family. As to quaternary structure, part of the 30S ribosomal subunit. Contacts proteins S4 and S8.

Its function is as follows. With S4 and S12 plays an important role in translational accuracy. Functionally, located at the back of the 30S subunit body where it stabilizes the conformation of the head with respect to the body. The chain is Small ribosomal subunit protein uS5 from Phocaeicola vulgatus (strain ATCC 8482 / DSM 1447 / JCM 5826 / CCUG 4940 / NBRC 14291 / NCTC 11154) (Bacteroides vulgatus).